Consider the following 1793-residue polypeptide: Protein TIC 214 (1793 aa).

6 helical membrane passes run 11-31 (LVSL…YYGF), 64-84 (FITG…HIAL), 90-112 (ITVI…NFLN), 129-149 (IFFQ…SSIL), 172-192 (VGWL…LVWI), and 222-242 (IFLI…PPIY). The interval 1504-1524 (DIEEDYGESDSKKGGKDKNKK) is disordered.

Belongs to the TIC214 family. Part of the Tic complex.

The protein localises to the plastid. The protein resides in the chloroplast inner membrane. In terms of biological role, involved in protein precursor import into chloroplasts. May be part of an intermediate translocation complex acting as a protein-conducting channel at the inner envelope. The chain is Protein TIC 214 from Lotus japonicus (Lotus corniculatus var. japonicus).